Reading from the N-terminus, the 322-residue chain is Protein farnesyltransferase/geranylgeranyltransferase type-1 subunit alpha (322 aa).

The interval 1–27 is disordered; sequence MSSSEEDDGYVPFSKRPEWSDVKPLAQ. PFTA repeat units follow at residues 62–95, 103–136, 138–171, 173–205, 213–246, and 287–321; these read RVLDLLEEVIQENPSNYTIWYYRREVLKAIEQDE, QEMNLLNDMGETDPKNYQIWNHRRFIVEKYIGSD, KEKEFLSGVLLEDAKNYHAWSHRQWLLKTYRDWN, ELAMVDKLLSLDHRNNSVWNHRFFVISNLNPSP, REVEFAFNHIRHSPNNESPWSYLKGLFKGQKIST, and NSLNICKLLSETIDPIHKNYWNFKYNTISDQLKLI.

Belongs to the protein prenyltransferase subunit alpha family. Heterodimer of fntA and fntB (farnesyltransferase). Heterodimer of an alpha and a beta subunit. The cofactor is Mg(2+).

The catalysed reaction is L-cysteinyl-[protein] + (2E,6E)-farnesyl diphosphate = S-(2E,6E)-farnesyl-L-cysteinyl-[protein] + diphosphate. It catalyses the reaction geranylgeranyl diphosphate + L-cysteinyl-[protein] = S-geranylgeranyl-L-cysteinyl-[protein] + diphosphate. In terms of biological role, catalyzes the transfer of a farnesyl or geranyl-geranyl moiety from farnesyl or geranyl-geranyl diphosphate to a cysteine at the fourth position from the C-terminus of several proteins having the C-terminal sequence Cys-aliphatic-aliphatic-X. The alpha subunit is thought to participate in a stable complex with the substrate. The beta subunit binds the peptide substrate. The chain is Protein farnesyltransferase/geranylgeranyltransferase type-1 subunit alpha (fntA) from Dictyostelium discoideum (Social amoeba).